We begin with the raw amino-acid sequence, 237 residues long: Pyridoxine 5'-phosphate synthase (237 aa).

3-amino-2-oxopropyl phosphate is bound by residues Asn-7 and Arg-18. Catalysis depends on His-43, which acts as the Proton acceptor. 2 residues coordinate 1-deoxy-D-xylulose 5-phosphate: Arg-45 and His-50. Residue Glu-70 is the Proton acceptor of the active site. Residue Thr-100 coordinates 1-deoxy-D-xylulose 5-phosphate. The active-site Proton donor is His-190. Residues Asp-191 and 213–214 (GH) each bind 3-amino-2-oxopropyl phosphate.

The protein belongs to the PNP synthase family. In terms of assembly, homooctamer; tetramer of dimers.

The protein localises to the cytoplasm. The catalysed reaction is 3-amino-2-oxopropyl phosphate + 1-deoxy-D-xylulose 5-phosphate = pyridoxine 5'-phosphate + phosphate + 2 H2O + H(+). Its pathway is cofactor biosynthesis; pyridoxine 5'-phosphate biosynthesis; pyridoxine 5'-phosphate from D-erythrose 4-phosphate: step 5/5. Catalyzes the complicated ring closure reaction between the two acyclic compounds 1-deoxy-D-xylulose-5-phosphate (DXP) and 3-amino-2-oxopropyl phosphate (1-amino-acetone-3-phosphate or AAP) to form pyridoxine 5'-phosphate (PNP) and inorganic phosphate. The sequence is that of Pyridoxine 5'-phosphate synthase from Christiangramia forsetii (strain DSM 17595 / CGMCC 1.15422 / KT0803) (Gramella forsetii).